Reading from the N-terminus, the 354-residue chain is Guanine nucleotide-binding protein G(i) subunit alpha-1 (354 aa).

Gly-2 carries the N-myristoyl glycine lipid modification. Cys-3 is lipidated: S-palmitoyl cysteine. One can recognise a G-alpha domain in the interval 32 to 354 (REVKLLLLGA…KNNLKDCGLF (323 aa)). Residues 35–48 (KLLLLGAGESGKST) form a G1 motif region. GTP is bound by residues 43–48 (ESGKST), 150–151 (DS), and 175–178 (LRTR). Ser-47 lines the Mg(2+) pocket. The G2 motif stretch occupies residues 173–181 (DVLRTRVKT). Thr-181 is a binding site for Mg(2+). The segment at 196–205 (FKMFDVGGQR) is G3 motif. Residues 200–204 (DVGGQ), 269–272 (NKKD), and Ala-326 each bind GTP. Residues 265–272 (ILFLNKKD) form a G4 motif region. The tract at residues 324 to 329 (TCATDT) is G5 motif.

It belongs to the G-alpha family. G(i/o/t/z) subfamily. As to quaternary structure, heterotrimeric G proteins are composed of 3 units; alpha, beta and gamma. The alpha chain contains the guanine nucleotide binding site. Part of a spindle orientation complex at least composed of GNAI1, GPSM2 and NUMA1. Identified in complex with the beta subunit GNB1 and the gamma subunit GNG1. Identified in complex with the beta subunit GNB1 and the gamma subunit GNG2. Component of the TAS2R14-GNAI1 complex, consisting of TAS2R14, GNAI1, GNB1 and GNG2; within the complex interacts with TAS2R14; this complex plays a role in the perception of bitterness. GTP binding causes dissociation of the heterotrimer, liberating the individual subunits so that they can interact with downstream effector proteins. Interacts (GDP-bound form) with GPSM1; this inhibits guanine nucleotide exchange and GTP binding. Interacts (GDP-bound form) with GPSM2 (via GoLoco domains); this inhibits guanine nucleotide exchange. Interacts with RGS10; this strongly enhances GTP hydrolysis. Interacts with RGS1 and RGS16; this strongly enhances GTPase activity. Interacts with RGS4. Interacts with RGS12. Interacts (via active GTP- or inactive GDP-bound forms) with RGS14 (via RGS and GoLoco domains). Interacts with RGS3, RGS6, RGS7, RGS8, RGS17, RGS18 and RGS20 (in vitro). Interacts (GDP-bound form) with RIC8A (via C-terminus); promoting GNAI1 folding and association with the plasma membrane. Interacts (inactive GDP-bound form) with NUCB1 (via GBA motif); the interaction leads to activation of GNAI1. Interacts (inactive GDP-bound form) with CCDC88C/DAPLE (via GBA motif); the interaction leads to activation of GNAI1. Interacts (inactive GDP-bound form) with CCDC8A/GIV (via GBA motif). Interacts with GPR15. Myristoylation at Gly-2 is required for membrane anchoring before palmitoylation. Post-translationally, palmitoylation at Cys-3 varies with membrane lipid composition.

It localises to the nucleus. The protein localises to the cytoplasm. Its subcellular location is the cell membrane. It is found in the cytoskeleton. The protein resides in the microtubule organizing center. It localises to the centrosome. The protein localises to the cell cortex. Its subcellular location is the membrane. Its function is as follows. Guanine nucleotide-binding proteins (G proteins) function as transducers downstream of G protein-coupled receptors (GPCRs) in numerous signaling cascades. The alpha chain contains the guanine nucleotide binding site and alternates between an active, GTP-bound state and an inactive, GDP-bound state. Signaling by an activated GPCR promotes GDP release and GTP binding. The alpha subunit has a low GTPase activity that converts bound GTP to GDP, thereby terminating the signal. Both GDP release and GTP hydrolysis are modulated by numerous regulatory proteins. Signaling is mediated via effector proteins, such as adenylate cyclase. Inhibits adenylate cyclase activity of ADCY1, ADCY5 and ADCY6, leading to decreased intracellular cAMP levels. The inactive GDP-bound form prevents the association of RGS14 with centrosomes and is required for the translocation of RGS14 from the cytoplasm to the plasma membrane. Required for normal cytokinesis during mitosis. Required for cortical dynein-dynactin complex recruitment during metaphase. The protein is Guanine nucleotide-binding protein G(i) subunit alpha-1 (GNAI1) of Pongo abelii (Sumatran orangutan).